The following is a 363-amino-acid chain: tRNA N6-adenosine threonylcarbamoyltransferase (363 aa).

The Fe cation site is built by H121 and H125. Residues L143–G147, D176, G189, and N287 contribute to the substrate site. D315 lines the Fe cation pocket.

The protein belongs to the KAE1 / TsaD family. The cofactor is Fe(2+).

It is found in the cytoplasm. The enzyme catalyses L-threonylcarbamoyladenylate + adenosine(37) in tRNA = N(6)-L-threonylcarbamoyladenosine(37) in tRNA + AMP + H(+). Functionally, required for the formation of a threonylcarbamoyl group on adenosine at position 37 (t(6)A37) in tRNAs that read codons beginning with adenine. Is involved in the transfer of the threonylcarbamoyl moiety of threonylcarbamoyl-AMP (TC-AMP) to the N6 group of A37, together with TsaE and TsaB. TsaD likely plays a direct catalytic role in this reaction. This Rhodopseudomonas palustris (strain BisA53) protein is tRNA N6-adenosine threonylcarbamoyltransferase.